Reading from the N-terminus, the 443-residue chain is Acid phosphatase type 7 (443 aa).

An N-terminal signal peptide occupies residues 1 to 23; the sequence is MAAAPPPPPPLLLLLLCVCAVFA. N-linked (GlcNAc...) asparagine glycans are attached at residues Asn53, Asn76, and Asn126. Asp140, Asp169, and Tyr172 together coordinate Fe cation. Asp169 contributes to the Zn(2+) binding site. Position 204 (Asn204) interacts with Zn(2+). The N-linked (GlcNAc...) asparagine glycan is linked to Asn210. Residue His288 coordinates Zn(2+). A glycan (N-linked (GlcNAc...) asparagine) is linked at Asn313. His338 is a Zn(2+) binding site. A Fe cation-binding site is contributed by His340. N-linked (GlcNAc...) asparagine glycosylation is found at Asn355 and Asn409.

It belongs to the metallophosphoesterase superfamily. Purple acid phosphatase family. Requires Fe cation as cofactor. Zn(2+) is required as a cofactor.

It is found in the secreted. The enzyme catalyses a phosphate monoester + H2O = an alcohol + phosphate. The sequence is that of Acid phosphatase type 7 from Danio rerio (Zebrafish).